Consider the following 465-residue polypeptide: Glucose-1-phosphate adenylyltransferase (465 aa).

Alpha-D-glucose 1-phosphate-binding positions include Gly-164, 181 to 182 (EK), and Ser-199.

The protein belongs to the bacterial/plant glucose-1-phosphate adenylyltransferase family. In terms of assembly, homotetramer.

The enzyme catalyses alpha-D-glucose 1-phosphate + ATP + H(+) = ADP-alpha-D-glucose + diphosphate. Its pathway is glycan biosynthesis; glycogen biosynthesis. Involved in the biosynthesis of ADP-glucose, a building block required for the elongation reactions to produce glycogen. Catalyzes the reaction between ATP and alpha-D-glucose 1-phosphate (G1P) to produce pyrophosphate and ADP-Glc. In Arthrobacter sp. (strain FB24), this protein is Glucose-1-phosphate adenylyltransferase.